Consider the following 41-residue polypeptide: uncharacterized protein (41 aa).

Residues Leu-10–Leu-32 traverse the membrane as a helical segment.

Its subcellular location is the cell inner membrane. This is an uncharacterized protein from Escherichia coli (strain K12).